The sequence spans 262 residues: Hydroxyethylthiazole kinase (262 aa).

Residue Met44 participates in substrate binding. ATP-binding residues include Arg118 and Thr166. Gly193 serves as a coordination point for substrate.

The protein belongs to the Thz kinase family. Mg(2+) is required as a cofactor.

The enzyme catalyses 5-(2-hydroxyethyl)-4-methylthiazole + ATP = 4-methyl-5-(2-phosphooxyethyl)-thiazole + ADP + H(+). The protein operates within cofactor biosynthesis; thiamine diphosphate biosynthesis; 4-methyl-5-(2-phosphoethyl)-thiazole from 5-(2-hydroxyethyl)-4-methylthiazole: step 1/1. In terms of biological role, catalyzes the phosphorylation of the hydroxyl group of 4-methyl-5-beta-hydroxyethylthiazole (THZ). The protein is Hydroxyethylthiazole kinase of Chlamydia felis (strain Fe/C-56) (Chlamydophila felis).